Consider the following 294-residue polypeptide: tRNA dimethylallyltransferase (294 aa).

ATP is bound at residue 10-17; it reads GPTAVGKT. Position 12 to 17 (12 to 17) interacts with substrate; that stretch reads TAVGKT. The tract at residues 35 to 38 is interaction with substrate tRNA; that stretch reads DSQQ.

Belongs to the IPP transferase family. In terms of assembly, monomer. It depends on Mg(2+) as a cofactor.

The catalysed reaction is adenosine(37) in tRNA + dimethylallyl diphosphate = N(6)-dimethylallyladenosine(37) in tRNA + diphosphate. Catalyzes the transfer of a dimethylallyl group onto the adenine at position 37 in tRNAs that read codons beginning with uridine, leading to the formation of N6-(dimethylallyl)adenosine (i(6)A). This is tRNA dimethylallyltransferase from Streptococcus pneumoniae (strain ATCC 700669 / Spain 23F-1).